The following is a 154-amino-acid chain: Myoglobin (154 aa).

The region spanning 2–148 (GLSDGEWQLV…FRNDMAAQYK (147 aa)) is the Globin domain. At Ser4 the chain carries Phosphoserine. His65 lines the nitrite pocket. His65 provides a ligand contact to O2. Position 68 is a phosphothreonine (Thr68). His94 serves as a coordination point for heme b.

Monomer.

The protein localises to the cytoplasm. It is found in the sarcoplasm. The catalysed reaction is Fe(III)-heme b-[protein] + nitric oxide + H2O = Fe(II)-heme b-[protein] + nitrite + 2 H(+). The enzyme catalyses H2O2 + AH2 = A + 2 H2O. Functionally, monomeric heme protein which primary function is to store oxygen and facilitate its diffusion within muscle tissues. Reversibly binds oxygen through a pentacoordinated heme iron and enables its timely and efficient release as needed during periods of heightened demand. Depending on the oxidative conditions of tissues and cells, and in addition to its ability to bind oxygen, it also has a nitrite reductase activity whereby it regulates the production of bioactive nitric oxide. Under stress conditions, like hypoxia and anoxia, it also protects cells against reactive oxygen species thanks to its pseudoperoxidase activity. The chain is Myoglobin from Rangifer tarandus (Reindeer).